The chain runs to 222 residues: Glutathione S-transferase alpha-1 (222 aa).

Methionine 1 carries the N-acetylmethionine modification. Positions glycine 3–glycine 83 constitute a GST N-terminal domain. An N6-succinyllysine modification is found at lysine 4. Residues tyrosine 9, lysine 45, glutamine 54–valine 55, and glutamine 67–threonine 68 contribute to the glutathione site. Residues aspartate 85–valine 208 form the GST C-terminal domain.

Belongs to the GST superfamily. Alpha family. In terms of assembly, homodimer. Homodimer or heterodimer of GSTA1 and GSTA2.

The protein localises to the cytoplasm. It catalyses the reaction RX + glutathione = an S-substituted glutathione + a halide anion + H(+). The enzyme catalyses prostaglandin A2 + glutathione = prostaglandin A2-S-(R)-glutathione. The catalysed reaction is prostaglandin J2 + glutathione = prostaglandin J2-S-(R)-glutathione. It carries out the reaction (13S)-hydroperoxy-(9Z,11E)-octadecadienoate + 2 glutathione = (13S)-hydroxy-(9Z,11E)-octadecadienoate + glutathione disulfide + H2O. It catalyses the reaction androst-5-ene-3,17-dione = androst-4-ene-3,17-dione. Glutathione S-transferase that catalyzes the nucleophilic attack of the sulfur atom of glutathione on the electrophilic groups of a wide range of exogenous and endogenous compounds. Involved in the formation of glutathione conjugates of both prostaglandin A2 (PGA2) and prostaglandin J2 (PGJ2). It also catalyzes the isomerization of D5-androstene-3,17-dione (AD) into D4-androstene-3,17-dione and may therefore play an important role in hormone biosynthesis. Through its glutathione-dependent peroxidase activity toward the fatty acid hydroperoxide (13S)-hydroperoxy-(9Z,11E)-octadecadienoate/13-HPODE it is also involved in the metabolism of oxidized linoleic acid. This chain is Glutathione S-transferase alpha-1 (Gsta1), found in Rattus norvegicus (Rat).